Consider the following 354-residue polypeptide: Guanine nucleotide-binding protein G(o) subunit alpha (354 aa).

Residue G2 is the site of N-myristoyl glycine attachment. A lipid anchor (S-palmitoyl cysteine) is attached at C3. Residues 32–354 (KDVKLLLLGA…AYNLRGCGLY (323 aa)) form the G-alpha domain. The G1 motif stretch occupies residues 35–48 (KLLLLGAGESGKST). The GTP site is built by E43, K46, S47, T48, S152, L176, R177, T178, and R179. Residue S47 coordinates Mg(2+). The segment at 174–182 (DILRTRVKT) is G2 motif. Residue T182 coordinates Mg(2+). A G3 motif region spans residues 197 to 206 (FRLFDVGGQR). The tract at residues 266–273 (ILFLNKKD) is G4 motif. N270, D273, and C325 together coordinate GTP. The tract at residues 324-329 (TCATDT) is G5 motif.

Belongs to the G-alpha family. G(i/o/t/z) subfamily. G proteins are composed of 3 units; alpha, beta and gamma.

It catalyses the reaction GTP + H2O = GDP + phosphate + H(+). Its function is as follows. Guanine nucleotide-binding proteins (G proteins) function as transducers downstream of G protein-coupled receptors (GPCRs) in numerous signaling cascades. The alpha chain contains the guanine nucleotide binding site and alternates between an active, GTP-bound state and an inactive, GDP-bound state. Signaling by an activated GPCR promotes GDP release and GTP binding. The alpha subunit has a low GTPase activity that converts bound GTP to GDP, thereby terminating the signal. Both GDP release and GTP hydrolysis are modulated by numerous regulatory proteins. Signaling is mediated via effector proteins, such as adenylate cyclase. Inhibits adenylate cyclase activity, leading to decreased intracellular cAMP levels. This Xenopus laevis (African clawed frog) protein is Guanine nucleotide-binding protein G(o) subunit alpha (gna0).